We begin with the raw amino-acid sequence, 77 residues long: MKRQKWIHEGLITESPSNGMFRVRLDNXDLIPSYVSGKIRRSLIRILPGDKVKIEVSRYDSTRGRIIYRLRNKDSKD.

The 71-residue stretch at 1–71 folds into the S1-like domain; that stretch reads MKRQKWIHEG…TRGRIIYRLR (71 aa).

The protein belongs to the IF-1 family. As to quaternary structure, component of the 30S ribosomal translation pre-initiation complex which assembles on the 30S ribosome in the order IF-2 and IF-3, IF-1 and N-formylmethionyl-tRNA(fMet); mRNA recruitment can occur at any time during PIC assembly.

The protein resides in the plastid. The protein localises to the chloroplast. In terms of biological role, one of the essential components for the initiation of protein synthesis. Stabilizes the binding of IF-2 and IF-3 on the 30S subunit to which N-formylmethionyl-tRNA(fMet) subsequently binds. Helps modulate mRNA selection, yielding the 30S pre-initiation complex (PIC). Upon addition of the 50S ribosomal subunit IF-1, IF-2 and IF-3 are released leaving the mature 70S translation initiation complex. The sequence is that of Translation initiation factor IF-1, chloroplastic from Leucophyllum frutescens (Texas ranger).